The primary structure comprises 194 residues: uncharacterized protein (194 aa).

Positions 6 to 66 (EFDTALVLHR…SAVKSYLEGK (61 aa)) constitute an HTH tetR-type domain. A DNA-binding region (H-T-H motif) is located at residues 29-48 (SLQDLLSHLGIARQSLYDTY).

This is an uncharacterized protein from Bacillus subtilis (strain 168).